Consider the following 298-residue polypeptide: Homoserine kinase (298 aa).

92–102 (PLARGLGSSAT) lines the ATP pocket.

The protein belongs to the GHMP kinase family. Homoserine kinase subfamily.

Its subcellular location is the cytoplasm. It carries out the reaction L-homoserine + ATP = O-phospho-L-homoserine + ADP + H(+). It participates in amino-acid biosynthesis; L-threonine biosynthesis; L-threonine from L-aspartate: step 4/5. Functionally, catalyzes the ATP-dependent phosphorylation of L-homoserine to L-homoserine phosphate. In Nostoc sp. (strain PCC 7120 / SAG 25.82 / UTEX 2576), this protein is Homoserine kinase (thrB).